The sequence spans 347 residues: Quinolinate synthase (347 aa).

Positions 47 and 68 each coordinate iminosuccinate. Cys-113 is a [4Fe-4S] cluster binding site. Iminosuccinate is bound by residues 139–141 and Ser-156; that span reads YAN. [4Fe-4S] cluster is bound at residue Cys-200. Iminosuccinate is bound by residues 226–228 and Thr-243; that span reads HPE. Residue Cys-297 coordinates [4Fe-4S] cluster.

The protein belongs to the quinolinate synthase family. Type 1 subfamily. [4Fe-4S] cluster is required as a cofactor.

It is found in the cytoplasm. It carries out the reaction iminosuccinate + dihydroxyacetone phosphate = quinolinate + phosphate + 2 H2O + H(+). It participates in cofactor biosynthesis; NAD(+) biosynthesis; quinolinate from iminoaspartate: step 1/1. Functionally, catalyzes the condensation of iminoaspartate with dihydroxyacetone phosphate to form quinolinate. This is Quinolinate synthase from Shigella dysenteriae serotype 1 (strain Sd197).